The primary structure comprises 359 residues: Putative nucleotidyltransferase MAB21L1 (359 aa).

A ribonucleoside 5'-triphosphate is bound by residues 23 to 24 (RK) and 63 to 66 (FEGL). Mg(2+) contacts are provided by Glu-73 and Glu-75. Residues Lys-248 and 252–255 (SLLK) contribute to the a ribonucleoside 5'-triphosphate site.

The protein belongs to the mab-21 family. As to quaternary structure, monomer. Homodecamer; composed of 2 back to back homopentamers. The protein may exist as monomer in solution and oiligomerizes upon ligand binding.

It is found in the nucleus. Functionally, putative nucleotidyltransferase required for several aspects of embryonic development including normal development of the eye. It is unclear whether it displays nucleotidyltransferase activity in vivo. Binds single-stranded RNA (ssRNA). The protein is Putative nucleotidyltransferase MAB21L1 (mab21l1) of Danio rerio (Zebrafish).